A 118-amino-acid chain; its full sequence is Aspartate 1-decarboxylase (118 aa).

Residue Ser-25 is the Schiff-base intermediate with substrate; via pyruvic acid of the active site. Ser-25 carries the pyruvic acid (Ser) modification. Substrate is bound at residue Thr-57. The active-site Proton donor is Tyr-58. Position 73-75 (Gly-73–Ala-75) interacts with substrate.

This sequence belongs to the PanD family. Heterooctamer of four alpha and four beta subunits. Requires pyruvate as cofactor. Post-translationally, is synthesized initially as an inactive proenzyme, which is activated by self-cleavage at a specific serine bond to produce a beta-subunit with a hydroxyl group at its C-terminus and an alpha-subunit with a pyruvoyl group at its N-terminus.

It localises to the cytoplasm. It carries out the reaction L-aspartate + H(+) = beta-alanine + CO2. It functions in the pathway cofactor biosynthesis; (R)-pantothenate biosynthesis; beta-alanine from L-aspartate: step 1/1. Functionally, catalyzes the pyruvoyl-dependent decarboxylation of aspartate to produce beta-alanine. The protein is Aspartate 1-decarboxylase of Hyphomonas neptunium (strain ATCC 15444).